A 398-amino-acid polypeptide reads, in one-letter code: Carbamoyl phosphate synthase small chain (398 aa).

Positions 1 to 199 are CPSase; it reads MTPAWATEKP…WNEGFGEQAE (199 aa). 3 residues coordinate L-glutamine: Ser-54, Gly-251, and Gly-253. The Glutamine amidotransferase type-1 domain maps to 203–391; the sequence is HVVAIDYGVK…VNLIREKRGE (189 aa). Cys-280 functions as the Nucleophile in the catalytic mechanism. Residues Leu-281, Gln-284, Asn-322, Gly-324, and Phe-325 each contribute to the L-glutamine site. Active-site residues include His-364 and Glu-366.

The protein belongs to the CarA family. Composed of two chains; the small (or glutamine) chain promotes the hydrolysis of glutamine to ammonia, which is used by the large (or ammonia) chain to synthesize carbamoyl phosphate. Tetramer of heterodimers (alpha,beta)4.

The enzyme catalyses hydrogencarbonate + L-glutamine + 2 ATP + H2O = carbamoyl phosphate + L-glutamate + 2 ADP + phosphate + 2 H(+). It carries out the reaction L-glutamine + H2O = L-glutamate + NH4(+). The protein operates within amino-acid biosynthesis; L-arginine biosynthesis; carbamoyl phosphate from bicarbonate: step 1/1. It functions in the pathway pyrimidine metabolism; UMP biosynthesis via de novo pathway; (S)-dihydroorotate from bicarbonate: step 1/3. Its function is as follows. Small subunit of the glutamine-dependent carbamoyl phosphate synthetase (CPSase). CPSase catalyzes the formation of carbamoyl phosphate from the ammonia moiety of glutamine, carbonate, and phosphate donated by ATP, constituting the first step of 2 biosynthetic pathways, one leading to arginine and/or urea and the other to pyrimidine nucleotides. The small subunit (glutamine amidotransferase) binds and cleaves glutamine to supply the large subunit with the substrate ammonia. The chain is Carbamoyl phosphate synthase small chain from Mesorhizobium japonicum (strain LMG 29417 / CECT 9101 / MAFF 303099) (Mesorhizobium loti (strain MAFF 303099)).